We begin with the raw amino-acid sequence, 859 residues long: Protein SEY1 (859 aa).

Residues 1-742 are Cytoplasmic-facing; sequence MMMNSHFAGV…KRSAIGGITQ (742 aa). The GB1/RHD3-type G domain maps to 49–291; sequence GFNYHLISVF…FQPQYHRRIP (243 aa). Residue 59–66 coordinates GTP; it reads GSQSTGKS. Positions 476 to 496 form a coiled coil; sequence FEHELKVYRKDLDDVSGRLRK. The disordered stretch occupies residues 525-544; it reads LGTGRGGSGAPEHGERPPSE. Residues 743 to 763 form a helical membrane-spanning segment; the sequence is VPLYFYGLLVALGWNEIVAVL. Residues 764–766 lie on the Lumenal side of the membrane; the sequence is RNP. Residues 767 to 787 traverse the membrane as a helical segment; the sequence is VYFIFLILCAVGAYVTYTLNL. The Cytoplasmic segment spans residues 788–859; the sequence is WGPMIRMGNA…DAEVEDLDDI (72 aa). The interval 816–859 is disordered; sequence SSESGRQAMAMSGNQPRGESVRMNRLNGNGKKDEDAEVEDLDDI. The span at 850–859 shows a compositional bias: acidic residues; it reads DAEVEDLDDI.

Belongs to the TRAFAC class dynamin-like GTPase superfamily. GB1/RHD3 GTPase family. RHD3 subfamily.

It localises to the endoplasmic reticulum membrane. Functionally, cooperates with the reticulon proteins and tubule-shaping DP1 family proteins to generate and maintain the structure of the tubular endoplasmic reticulum network. Has GTPase activity, which is required for its function in ER organization. The sequence is that of Protein SEY1 from Phaeosphaeria nodorum (strain SN15 / ATCC MYA-4574 / FGSC 10173) (Glume blotch fungus).